The chain runs to 43 residues: Protein PsbN (43 aa).

The chain crosses the membrane as a helical span at residues Phe-7–Phe-27.

This sequence belongs to the PsbN family.

Its subcellular location is the cell inner membrane. Its function is as follows. May play a role in photosystem I and II biogenesis. In Gloeobacter violaceus (strain ATCC 29082 / PCC 7421), this protein is Protein PsbN.